Consider the following 182-residue polypeptide: uncharacterized protein (182 aa).

Residues 55–182 (VNLHDLEKLC…GVKGMFWYPL (128 aa)) form the N-acetyltransferase domain.

The protein belongs to the acetyltransferase family. Ycf52 subfamily.

The protein localises to the plastid. The protein resides in the chloroplast. This is an uncharacterized protein from Gracilaria tenuistipitata var. liui (Red alga).